The primary structure comprises 385 residues: Probable di-N-acetylchitobiase 2 (385 aa).

The signal sequence occupies residues 1-15; it reads MRIILLLFLIVFVVA. The 362-residue stretch at 16–377 folds into the GH18 domain; it reads QSSSSSSSSG…DALASFFPQS (362 aa). N-linked (GlcNAc...) asparagine glycosylation is found at Asn-51 and Asn-101. Glu-129 (proton donor) is an active-site residue. Residues Asn-223, Asn-272, and Asn-296 are each glycosylated (N-linked (GlcNAc...) asparagine).

It belongs to the glycosyl hydrolase 18 family.

It localises to the lysosome. Functionally, involved in the degradation of asparagine-linked glycoproteins. May hydrolyze of N-acetyl-beta-D-glucosamine (1-4)N-acetylglucosamine chitobiose core from the reducing end of the bond. This Dictyostelium discoideum (Social amoeba) protein is Probable di-N-acetylchitobiase 2 (ctbs2).